Here is a 717-residue protein sequence, read N- to C-terminus: Putative amino acid transporter AAT1 (717 aa).

Over residues 1–10 the composition is skewed to basic and acidic residues; it reads MREGAFDASR. The interval 1–88 is disordered; the sequence is MREGAFDASR…DRAQTDSRQE (88 aa). The span at 16–25 shows a compositional bias: polar residues; it reads QRPSSLSTAQ. Positions 26 to 53 are enriched in low complexity; that stretch reads PPSDSRPPSSSSPPSSSSSSSSASSSSP. The segment covering 74–88 has biased composition (basic and acidic residues); the sequence is SAEKMDRAQTDSRQE. 8 helical membrane passes run 124–143, 149–170, 196–216, 236–253, 265–283, 303–320, 341–358, and 378–402; these read VLTL…PYAM, LIGL…YILM, AVDA…LVFL, HRAA…PLSV, FFPV…YRSL, FKSF…INVC, AALL…LGYL, and LMHV…IPTV. The interval 462–602 is disordered; sequence GDAEYGGAEA…REEREEREGQ (141 aa). Over residues 463–477 the composition is skewed to low complexity; the sequence is DAEYGGAEAGEATRG. Positions 497 to 519 are enriched in basic and acidic residues; it reads ARNRDRSRLHADSERSAGDREGS. Over residues 547 to 558 the composition is skewed to low complexity; sequence GSSSASSRSVDS. Residues 584–602 are compositionally biased toward basic and acidic residues; that stretch reads SGDREAREEREEREEREGQ. A run of 3 helical transmembrane segments spans residues 622–638, 644–669, and 681–702; these read VCVA…ALVL, VVGL…YAGI, and LLMV…IIIL.

The protein belongs to the amino acid/polyamine transporter 2 family.

It is found in the vacuole membrane. Functionally, putative amino acid transporter. Probably transports arginine. Involved in maintaining the osmotic homeostasis of the digestive vacuole. Required for extracellular parasite survival and bradyzoite differentiation. In Toxoplasma gondii (strain ATCC 50611 / Me49), this protein is Putative amino acid transporter AAT1.